The sequence spans 206 residues: GTP-binding protein YPTC5 (206 aa).

GTP is bound at residue 15 to 22 (GDSGVGKT). The Effector region signature appears at 37-45 (YKATIGADF). Residues 63 to 67 (DTAGQ) and 125 to 128 (NKID) contribute to the GTP site. 2 S-geranylgeranyl cysteine lipidation sites follow: Cys205 and Cys206.

Belongs to the small GTPase superfamily. Rab family.

The protein resides in the cell membrane. Protein transport. Probably involved in vesicular traffic. The chain is GTP-binding protein YPTC5 (YPTC5) from Chlamydomonas reinhardtii (Chlamydomonas smithii).